A 185-amino-acid chain; its full sequence is MINEIKKDAQERMEKSVEALKNNLLKVRTGRAHPSLLSGISVEYYGAKTPLNQVANVVAEDSRTLAITVFDKELAGLVEKAIMMSDLGLNPMSAGTVIRVPLPPLTEERRKDLVKIVRGEAENGRVAVRNIRRDANGDVKALLKEKEISEDDDRRAQDEIQKLTDAAVKSIDEVLAVKEKELMEV.

This sequence belongs to the RRF family.

The protein localises to the cytoplasm. Functionally, responsible for the release of ribosomes from messenger RNA at the termination of protein biosynthesis. May increase the efficiency of translation by recycling ribosomes from one round of translation to another. The polypeptide is Ribosome-recycling factor (Aliivibrio fischeri (strain MJ11) (Vibrio fischeri)).